Here is a 612-residue protein sequence, read N- to C-terminus: Alpha-glycerophosphate oxidase (612 aa).

21-49 provides a ligand contact to FAD; that stretch reads DLLIIGGGITGAGVALQAAASGLDTGLIE. Residues 398–408 are compositionally biased toward basic and acidic residues; sequence VETSTSEKELD. A disordered region spans residues 398–418; sequence VETSTSEKELDPSAVSRGSSF.

This sequence belongs to the FAD-dependent glycerol-3-phosphate dehydrogenase family. It depends on FAD as a cofactor.

It is found in the cytoplasm. It catalyses the reaction sn-glycerol 3-phosphate + O2 = dihydroxyacetone phosphate + H2O2. This chain is Alpha-glycerophosphate oxidase (glpO), found in Streptococcus pyogenes serotype M18 (strain MGAS8232).